The sequence spans 132 residues: MAVTHSVGDMLTKIRNASRVKHESVDLKMSKINKSILDILKEEGYIKNYNIFDKKGISFIKAILNYDNKRNPAINRIDAISTPGRKVYSSYKNMPRIKNGYGILIVSSSKGVITGKQAKDNKVGGELICSVW.

Belongs to the universal ribosomal protein uS8 family. As to quaternary structure, part of the 30S ribosomal subunit. Contacts proteins S5 and S12.

One of the primary rRNA binding proteins, it binds directly to 16S rRNA central domain where it helps coordinate assembly of the platform of the 30S subunit. The protein is Small ribosomal subunit protein uS8 of Borrelia turicatae (strain 91E135).